Consider the following 581-residue polypeptide: Phosphoglucomutase, cytoplasmic (581 aa).

Residues 1–11 are compositionally biased toward basic and acidic residues; that stretch reads MVFSVAKKDTT. The tract at residues 1–20 is disordered; the sequence is MVFSVAKKDTTPYEGQKPGT. Positions 24 and 123 each coordinate alpha-D-glucose 1,6-bisphosphate. The Phosphoserine intermediate role is filled by Ser123. Mg(2+)-binding residues include Ser123, Asp298, Asp300, and Asp302. Ser123 carries the phosphoserine modification. Alpha-D-glucose 1,6-bisphosphate contacts are provided by Asp302, Arg303, Thr366, Glu385, Ser387, and Lys398.

This sequence belongs to the phosphohexose mutase family. In terms of assembly, monomer. Mg(2+) is required as a cofactor.

The protein localises to the cytoplasm. The enzyme catalyses alpha-D-glucose 1-phosphate = alpha-D-glucose 6-phosphate. It carries out the reaction O-phospho-L-seryl-[protein] + alpha-D-glucose 1-phosphate = alpha-D-glucose 1,6-bisphosphate + L-seryl-[protein]. It catalyses the reaction alpha-D-glucose 1,6-bisphosphate + L-seryl-[protein] = O-phospho-L-seryl-[protein] + alpha-D-glucose 6-phosphate. Catalyzes the reversible isomerization of alpha-D-glucose 1-phosphate to alpha-D-glucose 6-phosphate. The mechanism proceeds via the intermediate compound alpha-D-glucose 1,6-bisphosphate. This enzyme participates in both the breakdown and synthesis of glucose. In Bromus inermis (Smooth brome grass), this protein is Phosphoglucomutase, cytoplasmic (PGM1).